The sequence spans 280 residues: Pantothenate synthetase (280 aa).

26-33 (MGNLHDGH) provides a ligand contact to ATP. The active-site Proton donor is H33. Q57 lines the (R)-pantoate pocket. Residue Q57 participates in beta-alanine binding. 147-150 (GKKD) lines the ATP pocket. Q153 contributes to the (R)-pantoate binding site. 184 to 187 (LSSR) serves as a coordination point for ATP.

Belongs to the pantothenate synthetase family. Homodimer.

Its subcellular location is the cytoplasm. It carries out the reaction (R)-pantoate + beta-alanine + ATP = (R)-pantothenate + AMP + diphosphate + H(+). The protein operates within cofactor biosynthesis; (R)-pantothenate biosynthesis; (R)-pantothenate from (R)-pantoate and beta-alanine: step 1/1. In terms of biological role, catalyzes the condensation of pantoate with beta-alanine in an ATP-dependent reaction via a pantoyl-adenylate intermediate. This is Pantothenate synthetase from Verminephrobacter eiseniae (strain EF01-2).